A 473-amino-acid chain; its full sequence is Zinc finger and SCAN domain-containing protein 21 (473 aa).

Residue lysine 27 forms a Glycyl lysine isopeptide (Lys-Gly) (interchain with G-Cter in SUMO2) linkage. Residues 45-127 (RQRFRQFGYH…TLLEDLEREL (83 aa)) form the SCAN box domain. The disordered stretch occupies residues 127–171 (LDEPGHQVSTPPNEQKPVWEKISSSGTAKESPSSMQPQPLETSHN). Over residues 148–171 (ISSSGTAKESPSSMQPQPLETSHN) the composition is skewed to polar residues. Glycyl lysine isopeptide (Lys-Gly) (interchain with G-Cter in SUMO2) cross-links involve residues lysine 221 and lysine 232. The tract at residues 244–272 (LENEKGTKPPLQEAGSKKGRESVPTKPTP) is disordered. Over residues 258-272 (GSKKGRESVPTKPTP) the composition is skewed to basic and acidic residues. 7 C2H2-type zinc fingers span residues 277 to 299 (YICAECGKAFSNSSNLTKHRRTH), 305 to 327 (YVCTKCGKAFSHSSNLTLHYRTH), 333 to 354 (YDCKCGKAFGQSSDLLKHQRMH), 360 to 382 (YQCKDCGKAFSGKGSLIRHYRIH), 388 to 410 (YQCNECGKSFSQHAGLSSHQRLH), 416 to 438 (YKCKECGKAFNHSSNFNKHHRIH), and 444 to 466 (YWCHHCGKTFCSKSNLSKHQRVH). Lysine 349 participates in a covalent cross-link: Glycyl lysine isopeptide (Lys-Gly) (interchain with G-Cter in SUMO2).

It belongs to the krueppel C2H2-type zinc-finger protein family.

The protein localises to the nucleus. Strong transcriptional activator. Plays an important role in spermatogenesis; essential for the progression of meiotic prophase I in spermatocytes. The polypeptide is Zinc finger and SCAN domain-containing protein 21 (ZSCAN21) (Gorilla gorilla gorilla (Western lowland gorilla)).